The primary structure comprises 273 residues: 1,4-dihydroxy-2-naphthoyl-CoA synthase (273 aa).

Residues R34, 73-77, Y85, 117-121, T143, S149, Y246, and K261 each bind substrate; these read SGGDQ and YAVGG. 142–144 serves as a coordination point for hydrogencarbonate; sequence QTG. Basic and acidic residues predominate over residues 254–265; the sequence is GRDAFKEKRDPD. Residues 254 to 273 are disordered; sequence GRDAFKEKRDPDFDQFPKFP.

This sequence belongs to the enoyl-CoA hydratase/isomerase family. MenB subfamily. Hydrogencarbonate serves as cofactor.

It catalyses the reaction 2-succinylbenzoyl-CoA + H(+) = 1,4-dihydroxy-2-naphthoyl-CoA + H2O. It functions in the pathway quinol/quinone metabolism; 1,4-dihydroxy-2-naphthoate biosynthesis; 1,4-dihydroxy-2-naphthoate from chorismate: step 6/7. Its pathway is quinol/quinone metabolism; menaquinone biosynthesis. Its function is as follows. Converts o-succinylbenzoyl-CoA (OSB-CoA) to 1,4-dihydroxy-2-naphthoyl-CoA (DHNA-CoA). In Staphylococcus aureus (strain MSSA476), this protein is 1,4-dihydroxy-2-naphthoyl-CoA synthase.